The primary structure comprises 429 residues: Dihydroorotase (429 aa).

Histidine 62 and histidine 64 together coordinate Zn(2+). Residues 64–66 (HFR) and asparagine 96 contribute to the substrate site. The Zn(2+) site is built by aspartate 154, histidine 181, and histidine 234. Asparagine 280 provides a ligand contact to substrate. Residue aspartate 307 coordinates Zn(2+). Residue aspartate 307 is part of the active site. Substrate contacts are provided by residues histidine 311 and 325–326 (FG).

Belongs to the metallo-dependent hydrolases superfamily. DHOase family. Class I DHOase subfamily. The cofactor is Zn(2+).

It carries out the reaction (S)-dihydroorotate + H2O = N-carbamoyl-L-aspartate + H(+). The protein operates within pyrimidine metabolism; UMP biosynthesis via de novo pathway; (S)-dihydroorotate from bicarbonate: step 3/3. Its function is as follows. Catalyzes the reversible cyclization of carbamoyl aspartate to dihydroorotate. The sequence is that of Dihydroorotase from Latilactobacillus sakei subsp. sakei (strain 23K) (Lactobacillus sakei subsp. sakei).